A 927-amino-acid polypeptide reads, in one-letter code: Disks large homolog 1 (927 aa).

In terms of domain architecture, L27 spans 4-64 (RKQDTQRALT…FYEVTLLDNP (61 aa)). 3 PDZ domains span residues 223-310 (EITL…RRRK), 318-405 (DIKL…AKPT), and 466-547 (KVVL…QYRP). Residues 581–651 (KRSLYVRALF…PSKRRVEKKE (71 aa)) enclose the SH3 domain. Positions 692 to 719 (DQSEMETSDVDQHVTSNASDSESSYRGQ) are disordered. Polar residues predominate over residues 704–717 (HVTSNASDSESSYR). The Guanylate kinase-like domain maps to 737–912 (SRPVIILGPT…IYNQIKQIIE (176 aa)).

This sequence belongs to the MAGUK family.

Its subcellular location is the cell membrane. It is found in the endoplasmic reticulum membrane. The protein resides in the cell junction. The protein localises to the cytoplasm. It localises to the apical cell membrane. Functionally, essential multidomain scaffolding protein required for normal development. Recruits channels, receptors and signaling molecules to discrete plasma membrane domains in polarized cells. Promotes epithelial cell layer barrier function via maintaining cell-cell adhesion. May play a role in adherens junction assembly, signal transduction and cell proliferation. The chain is Disks large homolog 1 (dlg1) from Xenopus tropicalis (Western clawed frog).